A 216-amino-acid chain; its full sequence is Acyl-homoserine-lactone synthase (216 aa).

Belongs to the autoinducer synthase family.

It carries out the reaction a fatty acyl-[ACP] + S-adenosyl-L-methionine = an N-acyl-L-homoserine lactone + S-methyl-5'-thioadenosine + holo-[ACP] + H(+). Functionally, required for the synthesis of an acyl-HSL autoinducer that binds to YukR and which is involved in the regulation of motility and morphology. This Yersinia ruckeri protein is Acyl-homoserine-lactone synthase (yukI).